Consider the following 293-residue polypeptide: 4-hydroxy-tetrahydrodipicolinate synthase (293 aa).

Position 51 (Thr51) interacts with pyruvate. The active-site Proton donor/acceptor is the Tyr140. Lys168 functions as the Schiff-base intermediate with substrate in the catalytic mechanism. Ile209 serves as a coordination point for pyruvate.

This sequence belongs to the DapA family. In terms of assembly, homotetramer; dimer of dimers.

The protein resides in the cytoplasm. It catalyses the reaction L-aspartate 4-semialdehyde + pyruvate = (2S,4S)-4-hydroxy-2,3,4,5-tetrahydrodipicolinate + H2O + H(+). The protein operates within amino-acid biosynthesis; L-lysine biosynthesis via DAP pathway; (S)-tetrahydrodipicolinate from L-aspartate: step 3/4. Catalyzes the condensation of (S)-aspartate-beta-semialdehyde [(S)-ASA] and pyruvate to 4-hydroxy-tetrahydrodipicolinate (HTPA). The sequence is that of 4-hydroxy-tetrahydrodipicolinate synthase from Streptococcus mutans serotype c (strain ATCC 700610 / UA159).